A 454-amino-acid chain; its full sequence is F-box/WD-40 repeat-containing protein At3g52030 (454 aa).

In terms of domain architecture, F-box spans 20 to 66; it reads PTSIESLDADILCIIFSFLDLFDLVHCTVVCNSWNAVIKRLKLLQAS. WD repeat units lie at residues 85–116, 117–153, 170–214, 215–255, 258–296, 301–340, 343–383, and 422–454; these read DRPA…RWEA, HSHR…CMEE, SKKL…SIFP, SRAG…CSQI, TQGG…PVAT, ITAG…RLWE, VSPN…VLSR, and KVRP…FNLS.

The polypeptide is F-box/WD-40 repeat-containing protein At3g52030 (Arabidopsis thaliana (Mouse-ear cress)).